Reading from the N-terminus, the 130-residue chain is Protein YoeA (130 aa).

The first 28 residues, 1-28, serve as a signal peptide directing secretion; that stretch reads MLYNIPCRIYILSTLSLCISGIVSTATA. In terms of domain architecture, TBDR plug spans 51–130; that stretch reads NLWESPATIQ…RCRRYSRGER (80 aa).

It belongs to the TonB-dependent receptor family.

The chain is Protein YoeA (yoeA) from Escherichia coli (strain K12).